The sequence spans 345 residues: Probable S-adenosylmethionine carrier 2, chloroplastic (345 aa).

The transit peptide at 1 to 31 (MTKALSGFCCSLSLSTLVRSSSSHMDSDIVS) directs the protein to the chloroplast. 3 Solcar repeats span residues 76–148 (RVLY…TKQK), 157–239 (LSAV…LRIG), and 252–334 (ENAM…TKQI). 5 helical membrane-spanning segments follow: residues 82 to 102 (LITG…IDTI), 121 to 141 (YSGL…FFGV), 156 to 176 (NLSA…SSIV), 254 to 274 (AMIG…LDVI), and 309 to 329 (GMGP…GVLE).

This sequence belongs to the mitochondrial carrier (TC 2.A.29) family. In terms of tissue distribution, expressed at low levels in seedlings, leaves, flowers, stems and roots.

The protein resides in the plastid. The protein localises to the chloroplast membrane. Its function is as follows. Probable S-adenosylmethionine (SAM) transporter able to catalyze both uniport and exchange reactions through membranes. The chain is Probable S-adenosylmethionine carrier 2, chloroplastic (SAMC2) from Arabidopsis thaliana (Mouse-ear cress).